The chain runs to 136 residues: MLSPKRTKFRKPHRGHLRGKATRGNTIVFGDFALQAQEPCWITSRQIEAGRRVLTRYVRRGGKLWIRIFPDKAVTMRPAGTRMGSGKGAPDYWVAVVHPGKILYEMQGVSETIARQAMRIAAYKMPVKTKFLTKQA.

Belongs to the universal ribosomal protein uL16 family. As to quaternary structure, part of the 50S ribosomal subunit.

The protein localises to the plastid. The protein resides in the chloroplast. This Chlamydomonas sp. (strain WXM) protein is Large ribosomal subunit protein uL16c.